A 227-amino-acid polypeptide reads, in one-letter code: NAD(P)H-quinone oxidoreductase subunit K, chloroplastic (227 aa).

4 residues coordinate [4Fe-4S] cluster: Cys43, Cys44, Cys108, and Cys139.

The protein belongs to the complex I 20 kDa subunit family. As to quaternary structure, NDH is composed of at least 16 different subunits, 5 of which are encoded in the nucleus. [4Fe-4S] cluster serves as cofactor.

Its subcellular location is the plastid. The protein resides in the chloroplast thylakoid membrane. It carries out the reaction a plastoquinone + NADH + (n+1) H(+)(in) = a plastoquinol + NAD(+) + n H(+)(out). The catalysed reaction is a plastoquinone + NADPH + (n+1) H(+)(in) = a plastoquinol + NADP(+) + n H(+)(out). Its function is as follows. NDH shuttles electrons from NAD(P)H:plastoquinone, via FMN and iron-sulfur (Fe-S) centers, to quinones in the photosynthetic chain and possibly in a chloroplast respiratory chain. It has NADH- and deamino-NADH-specific dehydrogenase activity, using ferricyanide or quinones as acceptors. The immediate electron acceptor for the enzyme in this species is believed to be plastoquinone. Couples the redox reaction to proton translocation, and thus conserves the redox energy in a proton gradient. This chain is NAD(P)H-quinone oxidoreductase subunit K, chloroplastic, found in Pisum sativum (Garden pea).